Consider the following 120-residue polypeptide: Ribosome-binding factor A (120 aa).

It belongs to the RbfA family. Monomer. Binds 30S ribosomal subunits, but not 50S ribosomal subunits or 70S ribosomes.

It is found in the cytoplasm. One of several proteins that assist in the late maturation steps of the functional core of the 30S ribosomal subunit. Associates with free 30S ribosomal subunits (but not with 30S subunits that are part of 70S ribosomes or polysomes). Required for efficient processing of 16S rRNA. May interact with the 5'-terminal helix region of 16S rRNA. The polypeptide is Ribosome-binding factor A (Chlamydia pneumoniae (Chlamydophila pneumoniae)).